We begin with the raw amino-acid sequence, 290 residues long: Ribonuclease HIII (290 aa).

An RNase H type-2 domain is found at 78–290 (LPLIGTDEVG…FKNTEKAKNA (213 aa)). 3 residues coordinate a divalent metal cation: aspartate 84, glutamate 85, and aspartate 187.

The protein belongs to the RNase HII family. RnhC subfamily. The cofactor is Mn(2+). It depends on Mg(2+) as a cofactor.

It localises to the cytoplasm. The enzyme catalyses Endonucleolytic cleavage to 5'-phosphomonoester.. Endonuclease that specifically degrades the RNA of RNA-DNA hybrids. In Streptococcus pneumoniae (strain P1031), this protein is Ribonuclease HIII.